The chain runs to 55 residues: Large ribosomal subunit protein bL33A (55 aa).

The protein belongs to the bacterial ribosomal protein bL33 family.

The polypeptide is Large ribosomal subunit protein bL33A (Mycobacterium sp. (strain KMS)).